Reading from the N-terminus, the 89-residue chain is Small ribosomal subunit protein uS14 (89 aa).

Belongs to the universal ribosomal protein uS14 family. Part of the 30S ribosomal subunit. Contacts proteins S3 and S10.

Its function is as follows. Binds 16S rRNA, required for the assembly of 30S particles and may also be responsible for determining the conformation of the 16S rRNA at the A site. The polypeptide is Small ribosomal subunit protein uS14 (Phytoplasma australiense).